The primary structure comprises 341 residues: Glycerol-3-phosphate dehydrogenase [NAD(P)+] (341 aa).

Positions 17, 18, 37, and 112 each coordinate NADPH. The sn-glycerol 3-phosphate site is built by Lys-112 and Gly-140. Ala-144 serves as a coordination point for NADPH. Positions 195, 248, 258, 259, and 260 each coordinate sn-glycerol 3-phosphate. Catalysis depends on Lys-195, which acts as the Proton acceptor. Arg-259 provides a ligand contact to NADPH. NADPH-binding residues include Val-283 and Glu-285.

Belongs to the NAD-dependent glycerol-3-phosphate dehydrogenase family.

Its subcellular location is the cytoplasm. The enzyme catalyses sn-glycerol 3-phosphate + NAD(+) = dihydroxyacetone phosphate + NADH + H(+). It carries out the reaction sn-glycerol 3-phosphate + NADP(+) = dihydroxyacetone phosphate + NADPH + H(+). It functions in the pathway membrane lipid metabolism; glycerophospholipid metabolism. In terms of biological role, catalyzes the reduction of the glycolytic intermediate dihydroxyacetone phosphate (DHAP) to sn-glycerol 3-phosphate (G3P), the key precursor for phospholipid synthesis. The chain is Glycerol-3-phosphate dehydrogenase [NAD(P)+] from Mycobacterium avium (strain 104).